Here is a 1663-residue protein sequence, read N- to C-terminus: Cortactin-binding protein 2 (1663 aa).

Disordered regions lie at residues 1–23, 203–222, 367–440, 454–478, and 498–616; these read MATD…AGAA, KKKT…RSTE, GASV…LHPG, GNAN…SPTS, and RFTS…PKPS. The stretch at 119–276 forms a coiled coil; the sequence is KKMQERMSAQ…EQLKRGSDSK (158 aa). Residues 386 to 396 show a composition bias toward low complexity; it reads PSTGSTPDPTS. Arginine 498 bears the Asymmetric dimethylarginine mark. Residues 583–593 show a composition bias toward polar residues; it reads TVASTPSSLPQ. ANK repeat units follow at residues 709 to 739, 743 to 772, 776 to 805, 809 to 838, 842 to 871, and 912 to 942; these read GRPT…DINY, DGHS…QVNA, NGFT…NINH, GGQT…NRSV, DGWT…PAHG, and EGWT…EPER. The disordered stretch occupies residues 1449–1482; that stretch reads KGESGAWRKVNTSPRRKSGRFSLPTWNKPDLSTE. Serine 1524 carries the phosphoserine modification. The disordered stretch occupies residues 1581–1663; sequence QKEVSPLSSH…KNEHLEKPNK (83 aa). Over residues 1582-1599 the composition is skewed to polar residues; that stretch reads KEVSPLSSHQTTECSNSK. Positions 1624-1638 are enriched in low complexity; that stretch reads SQNTKRSSSSSNTRQ. Positions 1639–1648 are enriched in polar residues; the sequence is IEINNNSKEV. The segment covering 1653 to 1663 has biased composition (basic and acidic residues); it reads HKNEHLEKPNK.

In terms of assembly, interacts with CTTN/cortactin SH3 domain. Interacts with STRN, STRN4/zinedin and MOB4/phocein; this interactions mediate the association with the STRIPAK core complex and may regulate dendritic spine distribution of the STRIPAK complex in hippocampal neurons. Activation of glutamate receptors weakens the interaction with STRN and STRN4. In terms of tissue distribution, highest expression in brain. Also expressed in kidney, pancreas, lung, heart, liver, skeletal muscle and placenta.

It is found in the cytoplasm. It localises to the cell cortex. The protein resides in the cell projection. Its subcellular location is the dendritic spine. Functionally, regulates the dendritic spine distribution of CTTN/cortactin in hippocampal neurons, and thus controls dendritic spinogenesis and dendritic spine maintenance. Associates with the striatin-interacting phosphatase and kinase (STRIPAK) core complex to regulate dendritic spine distribution of the STRIPAK complex in hippocampal neurons. This chain is Cortactin-binding protein 2, found in Homo sapiens (Human).